We begin with the raw amino-acid sequence, 245 residues long: Carboxy-S-adenosyl-L-methionine synthase (245 aa).

Residues Tyr-42, 67-69 (GCS), 92-93 (DN), 120-121 (DI), Asn-135, and Arg-202 each bind S-adenosyl-L-methionine.

Belongs to the class I-like SAM-binding methyltransferase superfamily. Cx-SAM synthase family. As to quaternary structure, homodimer.

The catalysed reaction is prephenate + S-adenosyl-L-methionine = carboxy-S-adenosyl-L-methionine + 3-phenylpyruvate + H2O. Its function is as follows. Catalyzes the conversion of S-adenosyl-L-methionine (SAM) to carboxy-S-adenosyl-L-methionine (Cx-SAM). In Vibrio campbellii (strain ATCC BAA-1116), this protein is Carboxy-S-adenosyl-L-methionine synthase.